A 2472-amino-acid chain; its full sequence is Highly reducing polyketide synthase xilA (2472 aa).

The 417-residue stretch at 1 to 417 (MPGGVRDLPA…GTNGHCIIDD (417 aa)) folds into the Ketosynthase family 3 (KS3) domain. Residues cysteine 162, histidine 298, and histidine 340 each act as for beta-ketoacyl synthase activity in the active site. The tract at residues 442–502 (NDINGKSGTN…QRKHHHPKTD (61 aa)) is disordered. Low complexity predominate over residues 450–489 (TNGANGANRVNGVNGVNGVNGVNGANGHSNASLLSNGSNN). The 336-residue stretch at 597–932 (FIFTGQGAQW…CTGTLFVHNV (336 aa)) folds into the Malonyl-CoA:ACP transacylase (MAT) domain. Residues 991–1129 (HDLLGSKVPG…GQIKVEVAKF (139 aa)) form an N-terminal hotdog fold region. Residues 991 to 1294 (HDLLGSKVPG…FTSLNNEQES (304 aa)) enclose the PKS/mFAS DH domain. Histidine 1023 functions as the Proton acceptor; for dehydratase activity in the catalytic mechanism. The C-terminal hotdog fold stretch occupies residues 1141-1294 (GRLVDAQTWY…FTSLNNEQES (154 aa)). Residue aspartate 1207 is the Proton donor; for dehydratase activity of the active site. Residues 1289–1505 (NNEQESPSTG…IITVHALRSI (217 aa)) are methyltransferase (CMeT) domain. One can recognise an Enoyl reductase (ER) domain in the interval 1724–2036 (GLLTSLYFKP…KGTHIGKMVI (313 aa)). The Ketoreductase (KR) domain maps to 2060-2239 (ASYILVGGLS…ATTVSLGFIK (180 aa)). One can recognise a Carrier domain in the interval 2391–2469 (ETVKLVSDAI…SIARVIVEEA (79 aa)). Serine 2428 carries the O-(pantetheine 4'-phosphoryl)serine modification.

Pantetheine 4'-phosphate is required as a cofactor.

It functions in the pathway secondary metabolite biosynthesis. Its function is as follows. Highly reducing polyketide synthase; part of the gene cluster that mediates the biosynthesis of the 6-methyl-2-pyrone derivative xylariolide D. XilA produces the 5-alkyl-6-methyl-2-pyrone backbone called prexylariolide D via sequential condensations of 4 malonyl-CoA units with one acetyl-CoA starter unit. During the biosynthesis, the linear polyketide chain is branched by the addition of an acetyl unit as the origin of the methyl group at the 2-pyrone ring. Prexylariolide D is then hydroxylated at the side chain by xilC to form the final product, xylariolide D. The chain is Highly reducing polyketide synthase xilA from Penicillium crustosum (Blue mold fungus).